Here is a 142-residue protein sequence, read N- to C-terminus: Hemoglobin subunit alpha (142 aa).

The Globin domain occupies 2–142 (VLSPADKSNV…VSTVLTSKYR (141 aa)). Phosphoserine is present on S4. Residues K8 and K12 each carry the N6-succinyllysine modification. K17 is subject to N6-acetyllysine; alternate. K17 bears the N6-succinyllysine; alternate mark. Residue Y25 is modified to Phosphotyrosine. At S36 the chain carries Phosphoserine. K41 carries the post-translational modification N6-succinyllysine. The residue at position 50 (S50) is a Phosphoserine. H59 provides a ligand contact to O2. A heme b-binding site is contributed by H88. A Phosphoserine modification is found at S103. At T109 the chain carries Phosphothreonine. At S125 the chain carries Phosphoserine. T135 and T138 each carry phosphothreonine. S139 is subject to Phosphoserine.

The protein belongs to the globin family. As to quaternary structure, heterotetramer of two alpha chains and two beta chains. As to expression, red blood cells.

Functionally, involved in oxygen transport from the lung to the various peripheral tissues. Its function is as follows. Hemopressin acts as an antagonist peptide of the cannabinoid receptor CNR1. Hemopressin-binding efficiently blocks cannabinoid receptor CNR1 and subsequent signaling. In Ursus maritimus (Polar bear), this protein is Hemoglobin subunit alpha (HBA).